The sequence spans 298 residues: L-xylulose reductase (298 aa).

Ile19, Asp68, and Asn103 together coordinate NADP(+). Catalysis depends on proton donor residues Ser161, Ser162, and Tyr175. Residues Tyr175, Lys179, and Val207 each contribute to the NADP(+) site. Lys179 (lowers pKa of active site Tyr) is an active-site residue.

It belongs to the short-chain dehydrogenases/reductases (SDR) family.

The catalysed reaction is xylitol + NADP(+) = L-xylulose + NADPH + H(+). It participates in carbohydrate degradation; L-arabinose degradation via L-arabinitol; D-xylulose 5-phosphate from L-arabinose (fungal route): step 3/5. L-xylulose reductase involved in the catabolism of L-arabinose through an oxidoreductive pathway. Catalyzes the NADPH-dependent reduction of L-xylulose. This Aspergillus niger (strain ATCC 1015 / CBS 113.46 / FGSC A1144 / LSHB Ac4 / NCTC 3858a / NRRL 328 / USDA 3528.7) protein is L-xylulose reductase.